The primary structure comprises 138 residues: Large ribosomal subunit protein bL17 (138 aa).

It belongs to the bacterial ribosomal protein bL17 family. As to quaternary structure, part of the 50S ribosomal subunit. Contacts protein L32.

The polypeptide is Large ribosomal subunit protein bL17 (Methylorubrum extorquens (strain CM4 / NCIMB 13688) (Methylobacterium extorquens)).